The primary structure comprises 270 residues: Vegetative storage protein 1 (270 aa).

An N-terminal signal peptide occupies residues 1 to 17 (MKILSLSLLLLLAATVS). Residues Asn115 and Asn215 are each glycosylated (N-linked (GlcNAc...) asparagine).

It belongs to the APS1/VSP family. Expressed in leaves and in gynoecia, especially in styles, the basal and distal ends of ovaries and in siliques.

Its function is as follows. May function as somatic storage protein during early seedling development. The chain is Vegetative storage protein 1 (VSP1) from Arabidopsis thaliana (Mouse-ear cress).